The chain runs to 82 residues: Acyl carrier protein (82 aa).

A Carrier domain is found at 4–79; sequence PEMEERLRKI…DALNYLETHQ (76 aa). Position 39 is an O-(pantetheine 4'-phosphoryl)serine (serine 39).

This sequence belongs to the acyl carrier protein (ACP) family. Post-translationally, 4'-phosphopantetheine is transferred from CoA to a specific serine of apo-ACP by AcpS. This modification is essential for activity because fatty acids are bound in thioester linkage to the sulfhydryl of the prosthetic group.

The protein localises to the cytoplasm. It participates in lipid metabolism; fatty acid biosynthesis. Functionally, carrier of the growing fatty acid chain in fatty acid biosynthesis. In Chloroflexus aurantiacus (strain ATCC 29366 / DSM 635 / J-10-fl), this protein is Acyl carrier protein.